A 46-amino-acid chain; its full sequence is Protein YmiA (46 aa).

The helical transmembrane segment at 22-42 (AWLAVFLGSALFWVVVALLIW) threads the bilayer.

The protein resides in the cell inner membrane. This is Protein YmiA (ymiA) from Escherichia coli (strain K12).